The primary structure comprises 777 residues: Shutoff protein (777 aa).

2 disordered regions span residues 1 to 55 and 261 to 283; these read MEED…SVPV and PLDS…DDDL. A compositionally biased stretch (polar residues) spans 9-20; that stretch reads QPDSETLTSPTS. Positions 250–314 are binding to host EIF4G; that stretch reads VMDHLLIKRV…VILVTVELEC (65 aa). Residues 317–435 form the RRM domain; it reads RFFANPQTLR…ELWTAFSERT (119 aa). Phosphotyrosine; by host occurs at positions 334 and 649. A disordered region spans residues 652-777; the sequence is PQTGEELNTP…AAARLVESQP (126 aa). A compositionally biased stretch (polar residues) spans 656 to 665; the sequence is EELNTPSPSA. Residues 728 to 738 show a composition bias toward gly residues; that stretch reads GAGGQTPQGRG. Residues 753–763 show a composition bias toward basic and acidic residues; the sequence is TRSEPASDGES.

It belongs to the adenoviridae shutoff protein family. In terms of assembly, monomer. Interacts with hexon protein; this interaction allows chaperoning and trimerization of hexon proteins. Interacts (via N-terminus) with host initiation factor EIF4G (via C-terminus). Interacts (via RRM domain) with viral mRNAs that contain the tripartite leader; this interaction allows ribosome shunting and expression of viral late mRNAs. Might be cleaved by the viral protease. In terms of processing, phosphorylated. Tyrosine phosphorylation enhances preferential binding to tripartite leader mRNAs and allows ribosome shunting. Post-translationally, methylated. Asymmetric dimethylation by host PRMT1 of the Arg/Gly-rich region may regulate shutoff protein binding to hexon and promote the capsid assembly in the nucleus.

The protein localises to the host cytoplasm. Its function is as follows. Protein that inhibits host translation while promoting late viral translation by ribosome shunting. Blocks host cap-dependent translation by binding to eIF4G, displacing MKNK1 from cap initiation complexes and preventing EIF4E phosphorylation. Binds to the tripartite leader sequence of viral late mRNAs and recruits host eIF4G, PABPC1/poly-A binding protein and 40S ribosomes subunits on viral mRNAs, allowing ribosome shunting and efficient translation of late viral mRNAs even though conventional translation via ribosome scanning from the cap has been shut off in the host cell. During assembly, acts as a chaperone protein that helps hexon proteins assembly into trimers. The polypeptide is Shutoff protein (Homo sapiens (Human)).